A 240-amino-acid chain; its full sequence is uncharacterized protein (240 aa).

The N-terminal stretch at 1–18 (MTRYTYLFILQIISCSFA) is a signal peptide. An N-linked (GlcNAc...) asparagine glycan is attached at N127. The helical transmembrane segment at 215 to 235 (GFISSSQLPQFVYLIVFTIIG) threads the bilayer.

The protein localises to the membrane. This is an uncharacterized protein from Caenorhabditis elegans.